A 1531-amino-acid polypeptide reads, in one-letter code: MEVSPLQPVNENMQVNKIKKNEDAKKRLSVERIYQKKTQLEHILLRPDTYIGSVELVTQQMWVYDEDVGINYREVTFVPGLYKIFDEILVNAADNKQRDPKMSCIRVTIDPENNLISIWNNGKGIPVVEHKVEKMYVPALIFGQLLTSSNYDDDEKKVTGGRNGYGAKLCNIFSTKFTVETASREYKKMFKQTWMDNMGRAGEMELKPFNGEDYTCITFQPDLSKFKMQSLDKDIVALMVRRAYDIAGSTKDVKVFLNGNKLPVKGFRSYVDMYLKDKLDETGNSLKVIHEQVNHRWEVCLTMSEKGFQQISFVNSIATSKGGRHVDYVADQIVTKLVDVVKKKNKGGVAVKAHQVKNHMWIFVNALIENPTFDSQTKENMTLQPKSFGSTCQLSEKFIKAAIGCGIVESILNWVKFKAQVQLNKKCSAVKHNRIKGIPKLDDANDAGGRNSTECTLILTEGDSAKTLAVSGLGVVGRDKYGVFPLRGKILNVREASHKQIMENAEINNIIKIVGLQYKKNYEDEDSLKTLRYGKIMIMTDQDQDGSHIKGLLINFIHHNWPSLLRHRFLEEFITPIVKVSKNKQEMAFYSLPEFEEWKSSTPNHKKWKVKYYKGLGTSTSKEAKEYFADMKRHRIQFKYSGPEDDAAISLAFSKKQIDDRKEWLTNFMEDRRQRKLLGLPEDYLYGQTTTYLTYNDFINKELILFSNSDNERSIPSMVDGLKPGQRKVLFTCFKRNDKREVKVAQLAGSVAEMSSYHHGEMSLMMTIINLAQNFVGSNNLNLLQPIGQFGTRLHGGKDSASPRYIFTMLSSLARLLFPPKDDHTLKFLYDDNQRVEPEWYIPIIPMVLINGAEGIGTGWSCKIPNFDVREIVNNIRRLMDGEEPLPMLPSYKNFKGTIEELAPNQYVISGEVAILNSTTIEISELPVRTWTQTYKEQVLEPMLNGTEKTPPLITDYREYHTDTTVKFVVKMTEEKLAEAERVGLHKVFKLQTSLTCNSMVLFDHVGCLKKYDTVLDILRDFFELRLKYYGLRKEWLLGMLGAESAKLNNQARFILEKIDGKIIIENKPKKELIKVLIQRGYDSDPVKAWKEAQQKVPDEEENEESDNEKETEKSDSVTDSGPTFNYLLDMPLWYLTKEKKDELCRLRNEKEQELDTLKRKSPSDLWKEDLATFIEELEAVEAKEKQDEQVGLPGKGGKAKGKKTQMAEVLPSPRGQRVIPRITIEMKAEAEKKNKKKIKNENTEGSPQEDGVELEGLKQRLEKKQKREPGTKTKKQTTLAFKPIKKGKKRNPWSDSESDRSSDESNFDVPPRETEPRRAATKTKFTMDLDSDEDFSDFDEKTDDEDFVPSDASPPKTKTSPKLSNKELKPQKSVVSDLEADDVKGSVPLSSSPPATHFPDETEITNPVPKKNVTVKKTAAKSQSSTSTTGAKKRAAPKGTKRDPALNSGVSQKPDPAKTKNRRKRKPSTSDDSDSNFEKIVSKAVTSKKSKGESDDFHMDFDSAVAPRAKSVRAKKPIKYLEESDEDDLF.

Residue methionine 1 is modified to N-acetylmethionine. Serine 4 bears the Phosphoserine mark. A Glycyl lysine isopeptide (Lys-Gly) (interchain with G-Cter in SUMO2) cross-link involves residue lysine 17. ATP-binding positions include asparagine 91, asparagine 120, and 148–150 (SSN). Glycyl lysine isopeptide (Lys-Gly) (interchain with G-Cter in SUMO2) cross-links involve residues lysine 156 and lysine 157. 161–168 (GRNGYGAK) serves as a coordination point for ATP. Lysine 261 participates in a covalent cross-link: Glycyl lysine isopeptide (Lys-Gly) (interchain with G-Cter in SUMO2). A Phosphothreonine modification is found at threonine 282. Positions 342–344 (KKK) are interaction with DNA. Lysine 352 is covalently cross-linked (Glycyl lysine isopeptide (Lys-Gly) (interchain with G-Cter in SUMO2)). Position 376-378 (376-378 (QTK)) interacts with ATP. Residues lysine 386, lysine 397, lysine 416, lysine 418, lysine 425, and lysine 440 each participate in a glycyl lysine isopeptide (Lys-Gly) (interchain with G-Cter in SUMO2) cross-link. The 118-residue stretch at 455-572 (CTLILTEGDS…SLLRHRFLEE (118 aa)) folds into the Toprim domain. Residue glutamate 461 coordinates Mg(2+). Residues lysine 466, lysine 480, and lysine 529 each participate in a glycyl lysine isopeptide (Lys-Gly) (interchain with G-Cter in SUMO2) cross-link. Mg(2+) contacts are provided by aspartate 541 and aspartate 543. Glycyl lysine isopeptide (Lys-Gly) (interchain with G-Cter in SUMO2) cross-links involve residues lysine 584, lysine 599, lysine 614, lysine 622, lysine 625, lysine 632, lysine 639, lysine 655, lysine 662, and lysine 676. Residues 715-1171 (IPSMVDGLKP…SPSDLWKEDL (457 aa)) enclose the Topo IIA-type catalytic domain. Tyrosine 805 (O-(5'-phospho-DNA)-tyrosine intermediate) is an active-site residue. The segment at 990-999 (KLQTSLTCNS) is interaction with DNA. The Nuclear export signal motif lies at 1018-1028 (ILRDFFELRLK). A Glycyl lysine isopeptide (Lys-Gly) (interchain with G-Cter in SUMO2) cross-link involves residue lysine 1075. 2 disordered regions span residues 1090-1123 (WKEAQQKVPDEEENEESDNEKETEKSDSVTDSGP) and 1184-1531 (KEKQ…DDLF). A compositionally biased stretch (acidic residues) spans 1099 to 1108 (DEEENEESDN). Serine 1106 carries the phosphoserine; by CK1 modification. Glycyl lysine isopeptide (Lys-Gly) (interchain with G-Cter in SUMO2) cross-links involve residues lysine 1114, lysine 1196, and lysine 1204. Position 1205 is a phosphothreonine (threonine 1205). Serine 1213 carries the post-translational modification Phosphoserine. A Glycyl lysine isopeptide (Lys-Gly) (interchain with G-Cter in SUMO2) cross-link involves residue lysine 1228. Lysine 1240 participates in a covalent cross-link: Glycyl lysine isopeptide (Lys-Gly) (interchain with G-Cter in SUMO1); alternate. Lysine 1240 is covalently cross-linked (Glycyl lysine isopeptide (Lys-Gly) (interchain with G-Cter in SUMO2); alternate). Threonine 1244 carries the phosphothreonine modification. The residue at position 1247 (serine 1247) is a Phosphoserine. Basic and acidic residues predominate over residues 1256–1272 (EGLKQRLEKKQKREPGT). Residues lysine 1259, lysine 1276, lysine 1283, and lysine 1286 each participate in a glycyl lysine isopeptide (Lys-Gly) (interchain with G-Cter in SUMO2) cross-link. 4 positions are modified to phosphoserine: serine 1295, serine 1297, serine 1299, and serine 1302. Threonine 1327 carries the post-translational modification Phosphothreonine. Positions 1330 to 1349 (LDSDEDFSDFDEKTDDEDFV) are enriched in acidic residues. Serine 1332 and serine 1337 each carry phosphoserine. Phosphothreonine; by PLK3 is present on threonine 1343. 2 positions are modified to phosphoserine: serine 1351 and serine 1354. Glycyl lysine isopeptide (Lys-Gly) (interchain with G-Cter in SUMO2) cross-links involve residues lysine 1363, lysine 1367, and lysine 1373. Serine 1374 and serine 1377 each carry phosphoserine. Lysine 1385 is covalently cross-linked (Glycyl lysine isopeptide (Lys-Gly) (interchain with G-Cter in SUMO2)). A phosphoserine mark is found at serine 1387, serine 1391, serine 1392, and serine 1393. Positions 1406–1431 (TNPVPKKNVTVKKTAAKSQSSTSTTG) are enriched in low complexity. Residue lysine 1422 forms a Glycyl lysine isopeptide (Lys-Gly) (interchain with G-Cter in SUMO2); alternate linkage. An N6-acetyllysine; alternate modification is found at lysine 1422. The interval 1433–1439 (KKRAAPK) is interaction with PLSCR1. Lysine 1442 participates in a covalent cross-link: Glycyl lysine isopeptide (Lys-Gly) (interchain with G-Cter in SUMO2); alternate. N6-acetyllysine; alternate is present on lysine 1442. Serine 1449 carries the phosphoserine modification. Residues lysine 1454 and lysine 1459 each participate in a glycyl lysine isopeptide (Lys-Gly) (interchain with G-Cter in SUMO2) cross-link. Serine 1469 is modified (phosphoserine; by CK2). Position 1470 is a phosphothreonine (threonine 1470). Phosphoserine is present on residues serine 1471, serine 1474, and serine 1476. Glycyl lysine isopeptide (Lys-Gly) (interchain with G-Cter in SUMO2) cross-links involve residues lysine 1484 and lysine 1492. Over residues 1491-1502 (SKGESDDFHMDF) the composition is skewed to basic and acidic residues. Phosphoserine occurs at positions 1495, 1504, and 1525.

The protein belongs to the type II topoisomerase family. Homodimer. Interacts with COPS5. Interacts with RECQL5; this stimulates DNA decatenation. Interacts with SETMAR; stimulates the topoisomerase activity. Interacts with DHX9; this interaction occurs in a E2 enzyme UBE2I- and RNA-dependent manner, negatively regulates DHX9-mediated double-stranded DNA and RNA duplex helicase activity and stimulates TOP2A-mediated supercoiled DNA relaxation activity. Interacts with HNRNPU (via C-terminus); this interaction protects the topoisomerase TOP2A from degradation and positively regulates the relaxation of supercoiled DNA in a RNA-dependent manner. Interacts with MCM3AP isoform GANP. Interacts with ERCC6. Interacts with PLSCR1. Interacts with GCNA; this interaction allows the resolution of topoisomerase II (TOP2A) DNA-protein cross-links. Interacts with POL1RA/RPA1 (via dock II) and UBTF in the context of Pol I complex; may assist Pol I transcription initiation by releasing supercoils occurring during DNA unwinding. Interacts with TPRN; TPRN interacts with a number of DNA damage response proteins, is recruited to sites of DNA damage and may play a role in DNA damage repair. Mg(2+) is required as a cofactor. The cofactor is Mn(2+). It depends on Ca(2+) as a cofactor. In terms of processing, phosphorylation has no effect on catalytic activity. However, phosphorylation at Ser-1106 by CSNK1D/CK1 promotes DNA cleavable complex formation. (Microbial infection) Deubiquitinated by Epstein-Barr virus BPLF1; leading to stabilized SUMOylated TOP2A trapped in cleavage complexes, which halts the DNA damage response to TOP2A-induced double-strand DNA breaks. Post-translationally, SUMOylated. In terms of tissue distribution, expressed in the tonsil, spleen, lymph node, thymus, skin, pancreas, testis, colon, kidney, liver, brain and lung. Also found in high-grade lymphomas, squamous cell lung tumors and seminomas.

The protein resides in the cytoplasm. It is found in the nucleus. Its subcellular location is the nucleoplasm. It localises to the nucleolus. The enzyme catalyses ATP-dependent breakage, passage and rejoining of double-stranded DNA.. With respect to regulation, specifically inhibited by the intercalating agent amsacrine. Key decatenating enzyme that alters DNA topology by binding to two double-stranded DNA molecules, generating a double-stranded break in one of the strands, passing the intact strand through the broken strand, and religating the broken strand. May play a role in regulating the period length of BMAL1 transcriptional oscillation. The sequence is that of DNA topoisomerase 2-alpha (TOP2A) from Homo sapiens (Human).